The following is a 141-amino-acid chain: ATP synthase epsilon chain (141 aa).

Belongs to the ATPase epsilon chain family. As to quaternary structure, F-type ATPases have 2 components, CF(1) - the catalytic core - and CF(0) - the membrane proton channel. CF(1) has five subunits: alpha(3), beta(3), gamma(1), delta(1), epsilon(1). CF(0) has three main subunits: a, b and c.

Its subcellular location is the cell inner membrane. In terms of biological role, produces ATP from ADP in the presence of a proton gradient across the membrane. The polypeptide is ATP synthase epsilon chain (Cellvibrio japonicus (strain Ueda107) (Pseudomonas fluorescens subsp. cellulosa)).